The chain runs to 150 residues: Putative F-box protein At2g33655 (150 aa).

Residues 1-47 (MEKMSDLPRELVEEILSRVPVKSMREVRVTCKTWNALSKHISKAEAA) form the F-box domain.

This Arabidopsis thaliana (Mouse-ear cress) protein is Putative F-box protein At2g33655.